The sequence spans 146 residues: 3-dehydroquinate dehydratase (146 aa).

The Proton acceptor role is filled by Y22. Substrate is bound by residues N73, H79, and D86. The active-site Proton donor is the H99. Substrate contacts are provided by residues 100–101 (VS) and R110.

The protein belongs to the type-II 3-dehydroquinase family. Homododecamer.

It carries out the reaction 3-dehydroquinate = 3-dehydroshikimate + H2O. It functions in the pathway metabolic intermediate biosynthesis; chorismate biosynthesis; chorismate from D-erythrose 4-phosphate and phosphoenolpyruvate: step 3/7. Its function is as follows. Catalyzes a trans-dehydration via an enolate intermediate. The sequence is that of 3-dehydroquinate dehydratase from Kineococcus radiotolerans (strain ATCC BAA-149 / DSM 14245 / SRS30216).